A 242-amino-acid chain; its full sequence is 7-cyano-7-deazaguanine synthase (242 aa).

Residue 12–22 (FSGGQDSTTCL) participates in ATP binding. Zn(2+) contacts are provided by Cys200, Cys215, Cys218, and Cys221.

It belongs to the QueC family. Zn(2+) serves as cofactor.

It carries out the reaction 7-carboxy-7-deazaguanine + NH4(+) + ATP = 7-cyano-7-deazaguanine + ADP + phosphate + H2O + H(+). It participates in purine metabolism; 7-cyano-7-deazaguanine biosynthesis. Catalyzes the ATP-dependent conversion of 7-carboxy-7-deazaguanine (CDG) to 7-cyano-7-deazaguanine (preQ(0)). In Nitratidesulfovibrio vulgaris (strain ATCC 29579 / DSM 644 / CCUG 34227 / NCIMB 8303 / VKM B-1760 / Hildenborough) (Desulfovibrio vulgaris), this protein is 7-cyano-7-deazaguanine synthase.